Here is a 187-residue protein sequence, read N- to C-terminus: Ribosome-recycling factor (187 aa).

It belongs to the RRF family.

Its subcellular location is the cytoplasm. Responsible for the release of ribosomes from messenger RNA at the termination of protein biosynthesis. May increase the efficiency of translation by recycling ribosomes from one round of translation to another. The sequence is that of Ribosome-recycling factor from Rhodopseudomonas palustris (strain BisA53).